The primary structure comprises 508 residues: Cytochrome P450 monooxygenase dmxR5 (508 aa).

A helical membrane pass occupies residues 24–44; the sequence is LTLGLGAILVVLMSFLAFLSY. N-linked (GlcNAc...) asparagine glycosylation is found at Asn387 and Asn405. Position 451 (Cys451) interacts with heme. N-linked (GlcNAc...) asparagine glycosylation occurs at Asn462. Residues 481 to 508 form a disordered region; the sequence is EHKKSTQESGHGVPLPSKLSKFSPREEN.

This sequence belongs to the cytochrome P450 family. Requires heme as cofactor.

The protein resides in the membrane. Its pathway is secondary metabolite biosynthesis. Cytochrome P450 monooxygenase; part of the gene cluster that mediates the biosynthesis of the dimeric xanthones cryptosporioptides. The pathway begins with the synthesis of atrochrysone thioester by the polyketide synthase dmx-nrPKS. The atrochrysone carboxyl ACP thioesterase dmxR1 then breaks the thioester bond and releases the atrochrysone carboxylic acid from dmx-nrPKS. Atrochrysone carboxylic acid is decarboxylated by the decarboxylase dmxR15, and oxidized by the anthrone oxygenase dmxR16 to yield emodin. Emodin is then reduced to emodin hydroquinone by the oxidoreductase dmxR7. A-ring reduction by the short chain dehydrogenase dmxR18, dehydration by the scytalone dehydratase-like protein dmxR17 and probable spontaneous re-oxidation, results in overall deoxygenation to chrysophanol. Baeyer-Villiger oxidation by the Baeyer-Villiger monooxygenase (BVMO) dmxR6 then yields monodictylactone in equilibrium with monodictyphenone. In the case of the cryptosporioptides biosynthesis, monodictylactone is reduced at C-12 to an alcohol (by the short chain dehydrogenases dmxR12 or dmxR8) and hydroxylated at C-5 by dmxR9, yielding the electron-rich aromatic which could eliminate H(2)O to form the ortho-quinonemethide, followed by tautomerisation to paraquinone and complete the formal reduction to produce the 10-methylgroup. Conjugate addition of C-4a-OH to the resulting paraquinone by the monooxygenase dmxR10 then gives cyclohexadienone, which is then reduced at C-5 by the short chain dehydrogenase dmxR3 to give the dihydroxanthone. The 6,7-epoxide in the cryptosporioptides could be introduced by the cytochrome P450 monooxygenase dmxL3. The highly reducing PKS dmxL2 manufactures butyrate, which is further carboxylated by dmxL1 to form ethylmalonate. It is not yet clear whether the carboxylation occurs while the butyrate is attached to the ACP of dmxL2, but this unusual fungal metabolite could then be esterified to O-5 by the O-acetyltransferase dmxR13. Finally, dimerization performed by dmxR5 gives the observed dimers cryptosporioptides A, B and C as the final products of the pathway. In Cryptosporiopsis sp. (strain 8999), this protein is Cytochrome P450 monooxygenase dmxR5.